The following is a 141-amino-acid chain: Large ribosomal subunit protein uL16 (141 aa).

It belongs to the universal ribosomal protein uL16 family. In terms of assembly, part of the 50S ribosomal subunit.

In terms of biological role, binds 23S rRNA and is also seen to make contacts with the A and possibly P site tRNAs. This Microchaete diplosiphon (Fremyella diplosiphon) protein is Large ribosomal subunit protein uL16.